The primary structure comprises 309 residues: Formimidoylglutamase (309 aa).

Mn(2+) contacts are provided by His120, Asp145, His147, Asp149, Asp236, and Asp238.

Belongs to the arginase family. It depends on Mn(2+) as a cofactor.

It catalyses the reaction N-formimidoyl-L-glutamate + H2O = formamide + L-glutamate. It participates in amino-acid degradation; L-histidine degradation into L-glutamate; L-glutamate from N-formimidoyl-L-glutamate (hydrolase route): step 1/1. Catalyzes the conversion of N-formimidoyl-L-glutamate to L-glutamate and formamide. The sequence is that of Formimidoylglutamase from Chromobacterium violaceum (strain ATCC 12472 / DSM 30191 / JCM 1249 / CCUG 213 / NBRC 12614 / NCIMB 9131 / NCTC 9757 / MK).